The primary structure comprises 352 residues: tRNA N6-adenosine threonylcarbamoyltransferase (352 aa).

Fe cation-binding residues include H109 and H113. Substrate-binding positions include T136 to G140, D169, G182, D186, and N284. A Fe cation-binding site is contributed by D312.

It belongs to the KAE1 / TsaD family. Fe(2+) serves as cofactor.

Its subcellular location is the cytoplasm. It catalyses the reaction L-threonylcarbamoyladenylate + adenosine(37) in tRNA = N(6)-L-threonylcarbamoyladenosine(37) in tRNA + AMP + H(+). Its function is as follows. Required for the formation of a threonylcarbamoyl group on adenosine at position 37 (t(6)A37) in tRNAs that read codons beginning with adenine. Is involved in the transfer of the threonylcarbamoyl moiety of threonylcarbamoyl-AMP (TC-AMP) to the N6 group of A37, together with TsaE and TsaB. TsaD likely plays a direct catalytic role in this reaction. The chain is tRNA N6-adenosine threonylcarbamoyltransferase from Chloroherpeton thalassium (strain ATCC 35110 / GB-78).